A 225-amino-acid polypeptide reads, in one-letter code: UPF0173 metal-dependent hydrolase PH1671 (225 aa).

The protein belongs to the UPF0173 family.

This is UPF0173 metal-dependent hydrolase PH1671 from Pyrococcus horikoshii (strain ATCC 700860 / DSM 12428 / JCM 9974 / NBRC 100139 / OT-3).